Reading from the N-terminus, the 419-residue chain is DNA ligase (419 aa).

Residues methionine 1–asparagine 120 form an NTD region. Residues arginine 121 to leucine 317 are AD domain. The active-site N6-AMP-lysine intermediate is the lysine 151. ATP contacts are provided by lysine 151, glutamate 203, and phenylalanine 232. Glutamate 203 is a binding site for a divalent metal cation. Glutamate 291 contributes to the a divalent metal cation binding site. Residues isoleucine 294 and lysine 316 each coordinate ATP. The segment at lysine 318–isoleucine 419 is OB domain.

The protein belongs to the ATP-dependent DNA ligase family.

The protein localises to the virion. The enzyme catalyses ATP + (deoxyribonucleotide)n-3'-hydroxyl + 5'-phospho-(deoxyribonucleotide)m = (deoxyribonucleotide)n+m + AMP + diphosphate.. Very low-fidelity DNA ligase that seals nicks in double-stranded DNA during DNA repair. Together with the viral repair DNA polymerase X, fills the single nucleotide gaps generated by the AP endonuclease. It is not essential for viral replication and recombination. Displays a very low adenylation activity towards DNA with 3'-dideoxy- or 3'-amino-terminated nicks compared to regular nick DNA. In African swine fever virus (isolate Tick/South Africa/Pretoriuskop Pr4/1996) (ASFV), this protein is DNA ligase.